Consider the following 343-residue polypeptide: Probable xyloglucan endotransglucosylase/hydrolase protein 30 (343 aa).

The N-terminal stretch at 1 to 23 is a signal peptide; it reads MSKSSYNHIFILILCLCLRSSSA. The GH16 domain occupies 24-224; it reads FTNLNTLSFE…YKFAPFVAEF (201 aa). The active-site Nucleophile is the E109. The Proton donor role is filled by E113. Xyloglucan-binding positions include E113 and 126–128; that span reads QTN. N-linked (GlcNAc...) asparagine glycosylation occurs at N132. Xyloglucan contacts are provided by residues 136–140, 203–204, G208, and R285; these read HRGRE and DW. A disulfide bridge connects residues C280 and C293. The disordered stretch occupies residues 306-343; sequence TGRLKFGGTEARERRRNRRQQRRPEIEIESDPDDRKLL.

Belongs to the glycosyl hydrolase 16 family. XTH group 3 subfamily. Post-translationally, contains at least one intrachain disulfide bond essential for its enzymatic activity. In terms of tissue distribution, predominantly expressed in green siliques.

The protein resides in the secreted. The protein localises to the cell wall. It localises to the extracellular space. Its subcellular location is the apoplast. The catalysed reaction is breaks a beta-(1-&gt;4) bond in the backbone of a xyloglucan and transfers the xyloglucanyl segment on to O-4 of the non-reducing terminal glucose residue of an acceptor, which can be a xyloglucan or an oligosaccharide of xyloglucan.. Functionally, catalyzes xyloglucan endohydrolysis (XEH) and/or endotransglycosylation (XET). Cleaves and religates xyloglucan polymers, an essential constituent of the primary cell wall, and thereby participates in cell wall construction of growing tissues. This chain is Probable xyloglucan endotransglucosylase/hydrolase protein 30 (XTH30), found in Arabidopsis thaliana (Mouse-ear cress).